Reading from the N-terminus, the 334-residue chain is L-lactate dehydrogenase B chain (334 aa).

Alanine 2 carries the post-translational modification N-acetylalanine. N6-acetyllysine is present on lysine 7. NAD(+) contacts are provided by residues 30–58 (GQVG…LEDK) and arginine 100. Serine 44 is modified (phosphoserine). Lysine 58 bears the N6-acetyllysine mark. A substrate-binding site is contributed by arginine 107. An N6-acetyllysine modification is found at lysine 119. Asparagine 139 serves as a coordination point for NAD(+). Residues asparagine 139 and arginine 170 each coordinate substrate. Histidine 194 acts as the Proton acceptor in catalysis. The residue at position 240 (tyrosine 240) is a Phosphotyrosine. Threonine 249 contacts substrate. Lysine 329 carries the N6-acetyllysine modification.

The protein belongs to the LDH/MDH superfamily. LDH family. As to quaternary structure, homotetramer. Interacts with PTEN upstream reading frame protein MP31; the interaction leads to inhibition of mitochondrial lactate dehydrogenase activity, preventing conversion of lactate to pyruvate in mitochondria.

It localises to the cytoplasm. Its subcellular location is the mitochondrion inner membrane. The enzyme catalyses (S)-lactate + NAD(+) = pyruvate + NADH + H(+). It functions in the pathway fermentation; pyruvate fermentation to lactate; (S)-lactate from pyruvate: step 1/1. Interconverts simultaneously and stereospecifically pyruvate and lactate with concomitant interconversion of NADH and NAD(+). In Sus scrofa (Pig), this protein is L-lactate dehydrogenase B chain (LDHB).